The following is a 2035-amino-acid chain: Ral GTPase-activating protein subunit alpha-1 (2035 aa).

Positions 343–384 are disordered; sequence LVSREESKNDTVDKADKTAEPEQSHSNTSTLTEREPSSSSLC. Basic and acidic residues predominate over residues 345 to 365; it reads SREESKNDTVDKADKTAEPEQ. Residues 366 to 384 are compositionally biased toward polar residues; the sequence is SHSNTSTLTEREPSSSSLC. 2 positions are modified to phosphoserine: S710 and S720. Positions 714 to 754 are disordered; sequence SFSRGWSRDQPGQAPMRQRSATTTGSPGTEKARSIVRQKTV. Phosphothreonine is present on T753. The residue at position 772 (S772) is a Phosphoserine. A Phosphothreonine modification is found at T777. At S796 the chain carries Phosphoserine. Over residues 807–817 the composition is skewed to basic and acidic residues; sequence ERAKVNKEDTS. Disordered regions lie at residues 807-834 and 848-911; these read ERAKVNKEDTSPKLPPLNSETGGSSANV and SGNA…SHSD. Composition is skewed to polar residues over residues 824-833 and 849-862; these read NSETGGSSAN and GNASTMTRRGSSPG. Residues S859, S860, and S863 each carry the phosphoserine modification. Residues 894–911 show a composition bias toward low complexity; that stretch reads SPASAGSSDLMSSDSHSD. S985, S989, S993, and S999 each carry phosphoserine. The segment at 986 to 1008 is disordered; that stretch reads ESASPVHSALGSRSQTPSPSTLN. Position 1001 is a phosphothreonine (T1001). 2 positions are modified to phosphoserine: S1003 and S1477. A minimal domain that binds to TCF3/E12 region spans residues 1326–2034; that stretch reads FTNKTVAHVA…PYHHFPADAD (709 aa). A coiled-coil region spans residues 1713–1746; it reads SEKQENDVINAILKQYTEEKEFVEKHFNDLNMKA. Residues 1795–2003 enclose the Rap-GAP domain; it reads LRNLDSRQCR…EERARYLQTI (209 aa).

As to quaternary structure, component of the heterodimeric RalGAP1 complex with RALGAPB. Heterodimerization is required for activity. Interacts with the HLH region of TCF3/isoform E12. As to expression, highly expressed in brain, thymus and testis with lower levels in lung and spleen and barely detectable in heart or liver (at protein level).

It is found in the cytoplasm. Its subcellular location is the nucleus. In terms of biological role, catalytic subunit of the heterodimeric RalGAP1 complex which acts as a GTPase activator for the Ras-like small GTPases RALA and RALB. The sequence is that of Ral GTPase-activating protein subunit alpha-1 (Ralgapa1) from Rattus norvegicus (Rat).